A 1340-amino-acid polypeptide reads, in one-letter code: WASH complex subunit 2 (1340 aa).

The tract at residues 1-219 (MNRTTPDQEL…VGSDRGSIVD (219 aa)) is sufficient for interaction with WASHC3, WASHC4 and WASHC5; required for interaction with WASHC1. Phosphoserine occurs at positions 157, 159, 204, 205, and 209. Low complexity predominate over residues 201 to 213 (GELSSEEGSVGSD). Positions 201-404 (GELSSEEGSV…SSSKPGKKIP (204 aa)) are disordered. Residues 219–231 (DTEEEKEEEESDE) are compositionally biased toward acidic residues. Residues 232-241 (DFAHHSDNDQ) show a composition bias toward basic and acidic residues. 2 stretches are compositionally biased toward acidic residues: residues 249–258 (SDEEEDDDGC) and 265–275 (EKEEEDIEDIE). At Ser-287 the chain carries Phosphoserine. Residues 292–306 (LAARIKGDAVGRVDE) show a composition bias toward basic and acidic residues. Phosphothreonine is present on Thr-330. Positions 354–365 (GSGGGLFSGGKG) are enriched in gly residues. The segment at 355–599 (SGGGLFSGGK…QTLSLQAQGE (245 aa)) is sufficient for interaction with CCDC93. Residues 356 to 1340 (GGGLFSGGKG…DDPLNAFGGQ (985 aa)) are interaction with VPS35. Residues 366–377 (LFDDEDEESDLF) carry the LFa 1 motif. Residues Ser-394 and Ser-396 each carry the phosphoserine modification. Short sequence motifs (LFa) lie at residues 410–418 (VFLGDTDVF), 449–462 (LFDD…DDFF), and 481–490 (IFGDDEGDLF). Disordered stretches follow at residues 421-586 (ASVP…GGTA), 618-663 (SSDE…KASL), and 695-838 (DSGG…STGV). Residues 450–461 (FDDDDGDDDDDF) are compositionally biased toward acidic residues. The span at 506-516 (DENKARAEKKV) shows a compositional bias: basic and acidic residues. Residues 517-527 (SLPSSKNLKPS) are compositionally biased toward low complexity. 3 short sequence motifs (LFa) span residues 536-547 (LFSDEEDSEDLF), 571-582 (LFEDEDEEDNLF), and 616-628 (LFSS…WNIP). Ser-538 and Ser-543 each carry phosphoserine. Residues 546 to 566 (LFSSQSASKLKGAPLLPGKLP) show a composition bias toward low complexity. Residues Ser-618 and Ser-619 each carry the phosphoserine modification. Residues 636–646 (SDSRSKGESRD) are compositionally biased toward basic and acidic residues. 3 short sequence motifs (LFa) span residues 663 to 673 (LFEEDEEDDLF), 689 to 701 (LFED…GSLF), and 725 to 737 (LFSD…AQLG). Phosphoserine occurs at positions 727, 751, 786, and 801. Residues 740–767 (PVDKKVESAKESLKFGRTDVAESEKEGL) are compositionally biased toward basic and acidic residues. Residues 802-816 (LFDEEEDKMEDQNTI) carry the LFa 11 motif. A compositionally biased stretch (basic and acidic residues) spans 822 to 833 (EVGKGRDPDARP). Short sequence motifs (LFa) lie at residues 838-846 (VFQDEELLF) and 855-861 (DPDVDLF). Residues Ser-873 and Ser-876 each carry the phosphoserine modification. Positions 877-887 (LFGDDEDDDLF) match the LFa 14 motif. Disordered regions lie at residues 906–950 (DYSV…KEPS) and 987–1205 (FPSS…EDED). The segment covering 916-930 (KHPETIQGIKEKGIW) has biased composition (basic and acidic residues). The tract at residues 936-1340 (QDSSGLAPFK…DDPLNAFGGQ (405 aa)) is interaction with phospholipids. A compositionally biased stretch (basic residues) spans 1027 to 1045 (NKSRVKMRGKRRPQTRAAR). Positions 1028–1046 (KSRVKMRGKRRPQTRAARR) are required for interaction with F-actin-capping protein subunit alpha (CAPZA1 or CAPZA2 or CAPZA3). Phosphoserine occurs at positions 1053 and 1086. Positions 1093–1109 (EALAAAAAPWEGGPVPG) are enriched in low complexity. Phosphoserine is present on Ser-1113. Short sequence motifs (LFa) lie at residues 1128–1135 (LFDSGDIF), 1170–1184 (MFPA…DDLF), 1200–1208 (LLEDEDDLF), 1233–1239 (IFEDDIF), 1261–1269 (LFDDNIDIF), and 1289–1298 (IFDDDMDDIF). Ser-1178 and Ser-1179 each carry phosphoserine. The segment at 1301–1325 (GIQAKTAKPKSRSAQAAPEPRFEHK) is disordered. The LFa 21 motif lies at 1329–1337 (IFDDPLNAF).

This sequence belongs to the FAM21 family. Component of the WASH core complex also described as WASH regulatory complex (SHRC) composed of WASHC1, WASHC2, WASHC3, WASHC4 and WASHC5; in the complex interacts (via N-terminus) directly with WASHC1. The WASH core complex associates with the F-actin-capping protein dimer (formed by CAPZA1, CAPZA2 or CAPZA3 and CAPZB) in a transient or substoichiometric manner which was initially described as WASH complex. Interacts with VPS35; mediates the association with the retromer CSC complex. Interacts with FKBP15. Interacts with CCDC93, CCDC22, VPS35L; indicative for an association of the WASH core complex with the CCC and retriever complexes. Directly interacts with TBC1D23.

Its subcellular location is the early endosome membrane. It localises to the cell membrane. Functionally, acts as a component of the WASH core complex that functions as a nucleation-promoting factor (NPF) at the surface of endosomes, where it recruits and activates the Arp2/3 complex to induce actin polymerization, playing a key role in the fission of tubules that serve as transport intermediates during endosome sorting. Mediates the recruitment of the WASH core complex to endosome membranes via binding to phospholipids and VPS35 of the retromer CSC. Mediates the recruitment of the F-actin-capping protein dimer to the WASH core complex probably promoting localized F-actin polymerization needed for vesicle scission. Via its C-terminus binds various phospholipids, most strongly phosphatidylinositol 4-phosphate (PtdIns-(4)P), phosphatidylinositol 5-phosphate (PtdIns-(5)P) and phosphatidylinositol 3,5-bisphosphate (PtdIns-(3,5)P2). Involved in the endosome-to-plasma membrane trafficking and recycling of SNX27-retromer-dependent cargo proteins, such as GLUT1. Required for the association of DNAJC13, ENTR1, ANKRD50 with retromer CSC subunit VPS35. Required for the endosomal recruitment of CCC and retriever complexes subunits COMMD1 and CCDC93 as well as the retrievere complex subunit VPS35L. The protein is WASH complex subunit 2 of Pongo abelii (Sumatran orangutan).